Consider the following 237-residue polypeptide: NAD-dependent protein deacylase (237 aa).

In terms of domain architecture, Deacetylase sirtuin-type spans M1–L235. G8–W28 is an NAD(+) binding site. The substrate site is built by Y53 and R56. Q86–D89 contributes to the NAD(+) binding site. H104 serves as the catalytic Proton acceptor. Residues C112, C115, C138, and C140 each contribute to the Zn(2+) site. Residues G177 to S179, N203 to E205, and A221 contribute to the NAD(+) site.

It belongs to the sirtuin family. Class III subfamily. Zn(2+) serves as cofactor.

The protein localises to the cytoplasm. The catalysed reaction is N(6)-acetyl-L-lysyl-[protein] + NAD(+) + H2O = 2''-O-acetyl-ADP-D-ribose + nicotinamide + L-lysyl-[protein]. The enzyme catalyses N(6)-succinyl-L-lysyl-[protein] + NAD(+) + H2O = 2''-O-succinyl-ADP-D-ribose + nicotinamide + L-lysyl-[protein]. NAD-dependent lysine deacetylase and desuccinylase that specifically removes acetyl and succinyl groups on target proteins. Modulates the activities of several proteins which are inactive in their acylated form. The protein is NAD-dependent protein deacylase of Mycolicibacterium paratuberculosis (strain ATCC BAA-968 / K-10) (Mycobacterium paratuberculosis).